The sequence spans 416 residues: Phosphatidylinositol 5-phosphate 4-kinase type-2 beta (416 aa).

N-acetylserine is present on Ser2. Thr8 is subject to Phosphothreonine. A Phosphoserine modification is found at Ser19. One can recognise a PIPK domain in the interval 38–415 (ASEPILSVLM…RFNEFMSNIL (378 aa)). Residues 64–70 (VMLMPDD) form a required for interaction with PIP5K1A region. Lys94 and Lys150 each carry N6-acetyllysine. ATP-binding positions include 202 to 204 (RNV) and Lys214. Residues 203-204 (NV) and Lys214 contribute to the GTP site. Phosphothreonine is present on Thr322. Ser326 carries the post-translational modification Phosphoserine. Asp369 contacts GTP.

In terms of assembly, homodimer. Binds TNFRSF1A. Interacts with PIP4K2A; the interaction suppresses ubiquitination by the SPOP/CUL3 complex. Probably interacts with PIP5K1A; the interaction inhibits PIP5K1A kinase activity. In terms of processing, ubiquitinated by the SPOP/CUL3 complex. Ubiquitination is stimulated by PtdIns5P levels. Phosphorylated on serine residues.

It localises to the endoplasmic reticulum membrane. It is found in the cell membrane. The protein resides in the nucleus. Its subcellular location is the cytoplasm. The enzyme catalyses a 1,2-diacyl-sn-glycero-3-phospho-(1D-myo-inositol-5-phosphate) + ATP = a 1,2-diacyl-sn-glycero-3-phospho-(1D-myo-inositol-4,5-bisphosphate) + ADP + H(+). It catalyses the reaction 1,2-dihexadecanoyl-sn-glycero-3-phospho-(1D-myo-inositol-5-phosphate) + ATP = 1,2-dihexadecanoyl-sn-glycero-3-phospho-(1D-myo-inositol-4,5-bisphosphate) + ADP + H(+). The catalysed reaction is 1,2-dihexadecanoyl-sn-glycero-3-phospho-(1D-myo-inositol-5-phosphate) + GTP = 1,2-dihexadecanoyl-sn-glycero-3-phospho-(1D-myo-inositol-4,5-bisphosphate) + GDP + H(+). Its function is as follows. Participates in the biosynthesis of phosphatidylinositol 4,5-bisphosphate. Preferentially utilizes GTP, rather than ATP, for PI(5)P phosphorylation and its activity reflects changes in direct proportion to the physiological GTP concentration. Its GTP-sensing activity is critical for metabolic adaptation. In collaboration with PIP4K2A, has a role in mediating autophagy in times of nutrient stress. Required for autophagosome-lysosome fusion and the regulation of cellular lipid metabolism. PIP4Ks negatively regulate insulin signaling through a catalytic-independent mechanism. They interact with PIP5Ks and suppress PIP5K-mediated PtdIns(4,5)P2 synthesis and insulin-dependent conversion to PtdIns(3,4,5)P3. This is Phosphatidylinositol 5-phosphate 4-kinase type-2 beta from Mus musculus (Mouse).